A 270-amino-acid chain; its full sequence is UPF0354 protein BC_4690 (270 aa).

The protein belongs to the UPF0354 family.

In Bacillus cereus (strain ATCC 14579 / DSM 31 / CCUG 7414 / JCM 2152 / NBRC 15305 / NCIMB 9373 / NCTC 2599 / NRRL B-3711), this protein is UPF0354 protein BC_4690.